Consider the following 122-residue polypeptide: NADPH-dependent 7-cyano-7-deazaguanine reductase (122 aa).

Residue cysteine 34 is the Thioimide intermediate of the active site. Aspartate 41 acts as the Proton donor in catalysis. Substrate contacts are provided by residues 56-58 (VEL) and 75-76 (HE).

The protein belongs to the GTP cyclohydrolase I family. QueF type 1 subfamily.

It localises to the cytoplasm. It carries out the reaction 7-aminomethyl-7-carbaguanine + 2 NADP(+) = 7-cyano-7-deazaguanine + 2 NADPH + 3 H(+). It participates in tRNA modification; tRNA-queuosine biosynthesis. Its function is as follows. Catalyzes the NADPH-dependent reduction of 7-cyano-7-deazaguanine (preQ0) to 7-aminomethyl-7-deazaguanine (preQ1). In Anaeromyxobacter dehalogenans (strain 2CP-1 / ATCC BAA-258), this protein is NADPH-dependent 7-cyano-7-deazaguanine reductase.